We begin with the raw amino-acid sequence, 443 residues long: Threonine/serine transporter TdcC (443 aa).

11 helical membrane-spanning segments follow: residues 22-42 (TTWT…FFPI), 44-64 (AGFG…PIAF), 97-117 (GVVI…IYGV), 140-160 (FVAL…KDLM), 163-183 (VMSY…LSLI), 207-227 (ILVT…FSPI), 261-281 (MLMV…LSPA), 319-339 (ASII…LGTL), 366-386 (ISMI…PNIL), 389-409 (IEAM…MYAI), and 423-443 (DNVF…YKLF).

Belongs to the amino acid/polyamine transporter 2 family. SdaC/TdcC subfamily.

Its subcellular location is the cell inner membrane. It carries out the reaction L-threonine(in) + H(+)(in) = L-threonine(out) + H(+)(out). The enzyme catalyses L-serine(in) + H(+)(in) = L-serine(out) + H(+)(out). Its function is as follows. Involved in the import of threonine and serine into the cell, with the concomitant import of a proton (symport system). This Citrobacter koseri (strain ATCC BAA-895 / CDC 4225-83 / SGSC4696) protein is Threonine/serine transporter TdcC.